Consider the following 157-residue polypeptide: Ubiquitin-like protein 4A (157 aa).

The Ubiquitin-like domain occupies 1-76; the sequence is MQLTVKALQG…LNLVVKPLEK (76 aa). Residue Lys-48 forms a Glycyl lysine isopeptide (Lys-Gly) (interchain with G-Cter in ubiquitin) linkage. Phosphoserine is present on Ser-90. The tract at residues 96-138 is required and sufficient for interaction with BAG6; that stretch reads WQLISKVLARHFSAADASRVLEQLQRDYERSLSRLTLDDIERL.

As to quaternary structure, component of the BAG6/BAT3 complex, at least composed of BAG6, UBL4A and GET4/TRC35. Interacts with BAG6; the interaction is direct and required for UBL4A protein stability. Interacts with USP13; may be indirect via BAG6. Post-translationally, polyubiquitinated. Ubiquitination by AMFR and deubiquitination by USP13 may regulate the interaction between the BAG6/BAT3 complex and SGTA and therefore may regulate client proteins fate.

It localises to the cytoplasm. The protein localises to the cytosol. Its subcellular location is the nucleus. In terms of biological role, as part of a cytosolic protein quality control complex, the BAG6/BAT3 complex, maintains misfolded and hydrophobic patches-containing proteins in a soluble state and participates in their proper delivery to the endoplasmic reticulum or alternatively can promote their sorting to the proteasome where they undergo degradation. The BAG6/BAT3 complex is involved in the post-translational delivery of tail-anchored/type II transmembrane proteins to the endoplasmic reticulum membrane. Recruited to ribosomes, it interacts with the transmembrane region of newly synthesized tail-anchored proteins and together with SGTA and ASNA1 mediates their delivery to the endoplasmic reticulum. Client proteins that cannot be properly delivered to the endoplasmic reticulum are ubiquitinated and sorted to the proteasome. Similarly, the BAG6/BAT3 complex also functions as a sorting platform for proteins of the secretory pathway that are mislocalized to the cytosol either delivering them to the proteasome for degradation or to the endoplasmic reticulum. The BAG6/BAT3 complex also plays a role in the endoplasmic reticulum-associated degradation (ERAD), a quality control mechanism that eliminates unwanted proteins of the endoplasmic reticulum through their retrotranslocation to the cytosol and their targeting to the proteasome. It maintains these retrotranslocated proteins in an unfolded yet soluble state condition in the cytosol to ensure their proper delivery to the proteasome. The polypeptide is Ubiquitin-like protein 4A (Homo sapiens (Human)).